Here is a 475-residue protein sequence, read N- to C-terminus: Aspartyl/glutamyl-tRNA(Asn/Gln) amidotransferase subunit B (475 aa).

The protein belongs to the GatB/GatE family. GatB subfamily. As to quaternary structure, heterotrimer of A, B and C subunits.

It catalyses the reaction L-glutamyl-tRNA(Gln) + L-glutamine + ATP + H2O = L-glutaminyl-tRNA(Gln) + L-glutamate + ADP + phosphate + H(+). It carries out the reaction L-aspartyl-tRNA(Asn) + L-glutamine + ATP + H2O = L-asparaginyl-tRNA(Asn) + L-glutamate + ADP + phosphate + 2 H(+). Allows the formation of correctly charged Asn-tRNA(Asn) or Gln-tRNA(Gln) through the transamidation of misacylated Asp-tRNA(Asn) or Glu-tRNA(Gln) in organisms which lack either or both of asparaginyl-tRNA or glutaminyl-tRNA synthetases. The reaction takes place in the presence of glutamine and ATP through an activated phospho-Asp-tRNA(Asn) or phospho-Glu-tRNA(Gln). The protein is Aspartyl/glutamyl-tRNA(Asn/Gln) amidotransferase subunit B of Pelodictyon phaeoclathratiforme (strain DSM 5477 / BU-1).